We begin with the raw amino-acid sequence, 73 residues long: UPF0235 protein SYO3AOP1_0257 (73 aa).

This sequence belongs to the UPF0235 family.

This Sulfurihydrogenibium sp. (strain YO3AOP1) protein is UPF0235 protein SYO3AOP1_0257.